The primary structure comprises 705 residues: Elongation factor G (705 aa).

The 287-residue stretch at glutamate 8–leucine 294 folds into the tr-type G domain. GTP-binding positions include alanine 17–threonine 24, aspartate 92–histidine 96, and asparagine 146–aspartate 149.

Belongs to the TRAFAC class translation factor GTPase superfamily. Classic translation factor GTPase family. EF-G/EF-2 subfamily.

The protein localises to the cytoplasm. Functionally, catalyzes the GTP-dependent ribosomal translocation step during translation elongation. During this step, the ribosome changes from the pre-translocational (PRE) to the post-translocational (POST) state as the newly formed A-site-bound peptidyl-tRNA and P-site-bound deacylated tRNA move to the P and E sites, respectively. Catalyzes the coordinated movement of the two tRNA molecules, the mRNA and conformational changes in the ribosome. The sequence is that of Elongation factor G from Cereibacter sphaeroides (strain ATCC 17023 / DSM 158 / JCM 6121 / CCUG 31486 / LMG 2827 / NBRC 12203 / NCIMB 8253 / ATH 2.4.1.) (Rhodobacter sphaeroides).